A 413-amino-acid polypeptide reads, in one-letter code: uncharacterized protein (413 aa).

The next 7 helical transmembrane spans lie at Gly-10 to Pro-32, Val-162 to Leu-184, Leu-189 to Val-211, Leu-232 to Phe-254, Tyr-259 to Val-276, Ala-288 to Thr-310, and Phe-325 to Leu-347.

The protein localises to the cell membrane. This is an uncharacterized protein from Aquifex aeolicus (strain VF5).